The chain runs to 441 residues: Cysteine--tRNA ligase (441 aa).

Cysteine 24 contacts Zn(2+). Residues 26–36 (PTVYNYIHIGN) carry the 'HIGH' region motif. Positions 204, 230, and 234 each coordinate Zn(2+). The short motif at 262–266 (KMSKS) is the 'KMSKS' region element. Lysine 265 contributes to the ATP binding site.

Belongs to the class-I aminoacyl-tRNA synthetase family. In terms of assembly, monomer. The cofactor is Zn(2+).

It is found in the cytoplasm. The catalysed reaction is tRNA(Cys) + L-cysteine + ATP = L-cysteinyl-tRNA(Cys) + AMP + diphosphate. The sequence is that of Cysteine--tRNA ligase from Mycoplasma capricolum subsp. capricolum (strain California kid / ATCC 27343 / NCTC 10154).